A 473-amino-acid polypeptide reads, in one-letter code: Kremen protein 1 (473 aa).

A signal peptide spans Met1–Ala19. Residues Arg21–Thr392 lie on the Extracellular side of the membrane. One can recognise a Kringle domain in the interval Glu31–Cys114. 8 disulfide bridges follow: Cys32-Cys114, Cys55-Cys95, Cys84-Cys109, Cys122-Cys186, Cys147-Cys167, Cys151-Cys169, Cys190-Cys198, and Cys214-Cys240. A glycan (N-linked (GlcNAc...) asparagine) is linked at Asn59. Positions Met116 to Leu210 constitute a WSC domain. The 108-residue stretch at Cys214–Thr321 folds into the CUB domain. N-linked (GlcNAc...) asparagine glycosylation is found at Asn217, Asn255, Asn293, Asn333, and Asn345. The helical transmembrane segment at Val393–Leu413 threads the bilayer. The Cytoplasmic segment spans residues His414–Asp473. Positions His414–Asp473 are essential for apoptotic activity.

Forms a ternary complex with DKK1 and LRP6. Interacts with LRP6 in a DKK1-dependent manner. Interacts with DKK1 and RSPO1 (via FU repeats). In the adult, widely expressed with high levels in heart, lung, kidney, skeletal muscle and testis.

The protein resides in the cell membrane. Receptor for Dickkopf proteins. Cooperates with DKK1/2 to inhibit Wnt/beta-catenin signaling by promoting the endocytosis of Wnt receptors LRP5 and LRP6. In the absence of DKK1, potentiates Wnt-beta-catenin signaling by maintaining LRP5 or LRP6 at the cell membrane. Can trigger apoptosis in a Wnt-independent manner and this apoptotic activity is inhibited upon binding of the ligand DKK1. Plays a role in limb development; attenuates Wnt signaling in the developing limb to allow normal limb patterning and can also negatively regulate bone formation. Modulates cell fate decisions in the developing cochlea with an inhibitory role in hair cell fate specification. This Mus musculus (Mouse) protein is Kremen protein 1 (Kremen1).